The primary structure comprises 258 residues: Synapse differentiation-inducing gene protein 1 (258 aa).

At 1-181 the chain is on the cytoplasmic side; the sequence is MAGVVEQKSG…NFLVMPPRDH (181 aa). Ser-137 is modified (phosphoserine). The helical transmembrane segment at 182–202 threads the bilayer; that stretch reads LGLSVFSMLCCFWPLGIAAFY. At 203–228 the chain is on the extracellular side; sequence LSHETNKAVAKGDFHQASTSSRRALF. Residues 229 to 249 constitute an intramembrane region (helical); the sequence is LAVLSITIGTGIYVGVAVALI. Over 250–258 the chain is Extracellular; sequence AYLSKSNHL.

Belongs to the CD225/Dispanin family. As to quaternary structure, homodimer. Interacts with GRIA1 and GRIA2.

Its subcellular location is the cell membrane. The protein resides in the early endosome membrane. The protein localises to the postsynaptic density membrane. It localises to the synapse. It is found in the cell projection. Its subcellular location is the dendrite. The protein resides in the dendritic spine. Functionally, may regulate AMPA receptor content at nascent synapses, and have a role in postsynaptic development and maturation. The polypeptide is Synapse differentiation-inducing gene protein 1 (SYNDIG1) (Bos taurus (Bovine)).